The primary structure comprises 1172 residues: Thrombospondin-2 (1172 aa).

An N-terminal signal peptide occupies residues 1 to 18; it reads MVWRLVLLALWVWPSTQA. The Laminin G-like domain occupies 19–215; that stretch reads GHQDKDTTFD…LQNVHLVFEN (197 aa). The tract at residues 19–232 is heparin-binding; the sequence is GHQDKDTTFD…KKGCQQGQGA (214 aa). N-linked (GlcNAc...) asparagine glycosylation is found at Asn151, Asn316, and Asn330. The region spanning 318–375 is the VWFC domain; the sequence is SACWQDGRFFAENETWVVDSCTTCTCKKFKTICHQITCPPATCASPSFVEGECCPSCL. TSP type-1 domains follow at residues 381 to 431, 437 to 492, and 494 to 549; these read EEGW…SKCD, DGGW…APCP, and DGRW…RSCP. 27 cysteine pairs are disulfide-bonded: Cys393/Cys425, Cys397/Cys430, Cys408/Cys415, Cys449/Cys486, Cys453/Cys491, Cys464/Cys476, Cys506/Cys543, Cys510/Cys548, Cys521/Cys533, Cys553/Cys564, Cys558/Cys574, Cys577/Cys588, Cys594/Cys610, Cys601/Cys619, Cys622/Cys646, Cys652/Cys665, Cys659/Cys678, Cys680/Cys691, Cys707/Cys715, Cys720/Cys740, Cys756/Cys776, Cys779/Cys799, Cys815/Cys835, Cys838/Cys858, Cys876/Cys896, Cys912/Cys932, and Cys948/Cys1169. Asn457 carries N-linked (GlcNAc...) asparagine glycosylation. Residues 549-589 enclose the EGF-like 1 domain; sequence PVDGCLSNPCFPGAQCSSFPDGSWSCGSCPVGFLGNGTHCE. An N-linked (GlcNAc...) asparagine glycan is attached at Asn584. In terms of domain architecture, EGF-like 2 spans 648–692; that stretch reads PENPCKDKTHNCHKHAECIYLGHFSDPMYKCECQTGYAGDGLICG. TSP type-3 repeat units follow at residues 693-728, 729-764, 765-787, 788-823, 824-846, 847-884, 885-920, and 921-956; these read EDSDLDGWPNLNLVCATNATYHCIKDNCPHLPNSGQ, EDFDKDGIGDACDDDDDNDGVTDEKDNCQLLFNPRQ, ADYDKDEVGDRCDNCPYVHNPAQ, IDTDNNGEGDACSVDIDGDDVFNERDNCPYVYNTDQ, RDTDGDGVGDHCDNCPLVHNPDQ, TDVDNDLVGDQCDNNEDIDDDGHQNNQDNCPYISNANQ, ADHDRDGQGDACDPDDDNDGVPDDRDNCRLVFNPDQ, and EDLDGDGRGDICKDDFDNDNIPDIDDVCPENNAISE. A glycan (N-linked (GlcNAc...) asparagine) is linked at Asn710. The disordered stretch occupies residues 843–931; it reads NPDQTDVDND…DLDGDGRGDI (89 aa). The segment covering 847-866 has biased composition (acidic residues); it reads TDVDNDLVGDQCDNNEDIDD. Residues 870–884 are compositionally biased toward polar residues; it reads QNNQDNCPYISNANQ. The span at 896 to 905 shows a compositional bias: acidic residues; the sequence is CDPDDDNDGV. Residues 928–930 carry the Cell attachment site motif; that stretch reads RGD. One can recognise a TSP C-terminal domain in the interval 960–1172; it reads RNFQMVPLDP…SDLKYECRDI (213 aa). N-linked (GlcNAc...) asparagine glycosylation is present at Asn1069.

The protein belongs to the thrombospondin family. In terms of assembly, homotrimer; disulfide-linked. Interacts (via the TSP type I repeats) with CD36; the interaction conveys an antiangiogenic effect. Interacts (via the TSP type I repeats) with HRG; the interaction blocks the antiangiogenic effect of THBS2 with CD36. Can bind to fibrinogen, fibronectin, laminin and type V collagen. In terms of tissue distribution, high expression in invertebral disk tissue.

In terms of biological role, adhesive glycoprotein that mediates cell-to-cell and cell-to-matrix interactions. Ligand for CD36 mediating antiangiogenic properties. This chain is Thrombospondin-2 (THBS2), found in Homo sapiens (Human).